Here is a 276-residue protein sequence, read N- to C-terminus: Rhomboid-type serine protease 2 (276 aa).

Helical transmembrane passes span 27-47 (LPLF…LTLV), 77-97 (FPFI…FTPL), 109-129 (TSVA…YVFV), 132-152 (FILH…LLLG), and 175-195 (WITP…SSFL). Residue Ser144 is the Nucleophile of the active site. The active site involves His197. A helical membrane pass occupies residues 198 to 218 (LAGLLVGYGFGLGYLKFLAPP).

It belongs to the peptidase S54 family.

The protein localises to the golgi apparatus membrane. It is found in the golgi apparatus. Its subcellular location is the cis-Golgi network membrane. The enzyme catalyses Cleaves type-1 transmembrane domains using a catalytic dyad composed of serine and histidine that are contributed by different transmembrane domains.. Its function is as follows. Probable rhomboid-type serine protease that catalyzes intramembrane proteolysis. This is Rhomboid-type serine protease 2 (rbd-2) from Neurospora crassa (strain ATCC 24698 / 74-OR23-1A / CBS 708.71 / DSM 1257 / FGSC 987).